A 303-amino-acid polypeptide reads, in one-letter code: Ribosomal protein uL3 glutamine methyltransferase (303 aa).

It belongs to the protein N5-glutamine methyltransferase family. PrmB subfamily.

The catalysed reaction is L-glutaminyl-[ribosomal protein uL3] + S-adenosyl-L-methionine = N(5)-methyl-L-glutaminyl-[ribosomal protein uL3] + S-adenosyl-L-homocysteine + H(+). In terms of biological role, methylates large ribosomal subunit protein uL3 on a specific glutamine residue. This Neisseria meningitidis serogroup B (strain ATCC BAA-335 / MC58) protein is Ribosomal protein uL3 glutamine methyltransferase.